A 157-amino-acid polypeptide reads, in one-letter code: Small ribosomal subunit protein bS6 (157 aa).

A compositionally biased stretch (basic and acidic residues) spans 96 to 151; that stretch reads HEEGPSAMMRKADRDRDRDERGGGGFRGDREGGFRGDREGGGFRGDRGPRRPRDDA. The disordered stretch occupies residues 96–157; the sequence is HEEGPSAMMR…RDDAPAATEE (62 aa).

It belongs to the bacterial ribosomal protein bS6 family.

Binds together with bS18 to 16S ribosomal RNA. This chain is Small ribosomal subunit protein bS6, found in Rhodopseudomonas palustris (strain BisA53).